A 214-amino-acid polypeptide reads, in one-letter code: Octanoyltransferase (214 aa).

One can recognise a BPL/LPL catalytic domain in the interval 29-214; it reads STTPDEIWIL…EHLQKQLMPT (186 aa). Substrate-binding positions include 69–76, 146–148, and 159–161; these read RGGEITYH, ALG, and GLA. Catalysis depends on Cys177, which acts as the Acyl-thioester intermediate.

Belongs to the LipB family.

It is found in the cytoplasm. It carries out the reaction octanoyl-[ACP] + L-lysyl-[protein] = N(6)-octanoyl-L-lysyl-[protein] + holo-[ACP] + H(+). It participates in protein modification; protein lipoylation via endogenous pathway; protein N(6)-(lipoyl)lysine from octanoyl-[acyl-carrier-protein]: step 1/2. Functionally, catalyzes the transfer of endogenously produced octanoic acid from octanoyl-acyl-carrier-protein onto the lipoyl domains of lipoate-dependent enzymes. Lipoyl-ACP can also act as a substrate although octanoyl-ACP is likely to be the physiological substrate. This chain is Octanoyltransferase, found in Polynucleobacter asymbioticus (strain DSM 18221 / CIP 109841 / QLW-P1DMWA-1) (Polynucleobacter necessarius subsp. asymbioticus).